We begin with the raw amino-acid sequence, 262 residues long: Co-chaperone protein DjlA (262 aa).

At 1-6 the chain is on the periplasmic side; the sequence is MRFWGK. The chain crosses the membrane as a helical span at residues 7-30; sequence FFGFVIGFMFGRFFGALLGLWLGH. The Cytoplasmic portion of the chain corresponds to 31–262; the sequence is LYDKRPGGGA…DRVKSERGMR (232 aa). The J domain maps to 196-262; sequence DAYHLLGITA…DRVKSERGMR (67 aa).

Homodimer.

The protein resides in the cell inner membrane. Functionally, regulatory DnaK co-chaperone. Direct interaction between DnaK and DjlA is needed for the induction of the wcaABCDE operon, involved in the synthesis of a colanic acid polysaccharide capsule, possibly through activation of the RcsB/RcsC phosphotransfer signaling pathway. The colanic acid capsule may help the bacterium survive conditions outside the host. The sequence is that of Co-chaperone protein DjlA from Shewanella oneidensis (strain ATCC 700550 / JCM 31522 / CIP 106686 / LMG 19005 / NCIMB 14063 / MR-1).